The chain runs to 228 residues: Large ribosomal subunit protein uL1 (228 aa).

Belongs to the universal ribosomal protein uL1 family. As to quaternary structure, part of the 50S ribosomal subunit.

Binds directly to 23S rRNA. The L1 stalk is quite mobile in the ribosome, and is involved in E site tRNA release. In terms of biological role, protein L1 is also a translational repressor protein, it controls the translation of the L11 operon by binding to its mRNA. The protein is Large ribosomal subunit protein uL1 of Clavibacter michiganensis subsp. michiganensis (strain NCPPB 382).